The primary structure comprises 483 residues: Probable serine incorporator (483 aa).

A run of 11 helical transmembrane segments spans residues 43–63, 109–129, 146–166, 169–189, 218–238, 249–269, 274–294, 295–315, 338–358, 414–434, and 457–477; these read STRI…WIML, IMFS…GVSS, LILL…FFIG, WSWI…ILLV, ISAT…MFHF, FFIG…MLPS, LPSS…YLVW, SAVS…PLFL, AGTN…SVAY, YSWS…MMVL, and VVSS…PVCL.

The protein belongs to the TDE1 family.

The protein resides in the endoplasmic reticulum membrane. In terms of biological role, enhances the incorporation of serine into phosphatidylserine and sphingolipids. This is Probable serine incorporator (serinc) from Monosiga brevicollis (Choanoflagellate).